Consider the following 98-residue polypeptide: NADH-ubiquinone oxidoreductase chain 4L (98 aa).

The next 3 helical transmembrane spans lie at Met-1–Phe-21, Ile-26–Leu-46, and Leu-61–Leu-81.

It belongs to the complex I subunit 4L family.

Its subcellular location is the mitochondrion membrane. The enzyme catalyses a ubiquinone + NADH + 5 H(+)(in) = a ubiquinol + NAD(+) + 4 H(+)(out). Its function is as follows. Core subunit of the mitochondrial membrane respiratory chain NADH dehydrogenase (Complex I) that is believed to belong to the minimal assembly required for catalysis. Complex I functions in the transfer of electrons from NADH to the respiratory chain. The immediate electron acceptor for the enzyme is believed to be ubiquinone. The protein is NADH-ubiquinone oxidoreductase chain 4L (nad4L) of Dictyostelium discoideum (Social amoeba).